The chain runs to 342 residues: 11-beta-hydroxysteroid dehydrogenase-like 6 (342 aa).

A helical; Signal-anchor for type II membrane protein transmembrane segment spans residues 10 to 30 (FLFPLLTLYALLVFYPTYQRL). NADP(+)-binding positions include 54–80 (GAAS…VDIR) and Asp105. Ser184 lines the substrate pocket. Catalysis depends on Tyr197, which acts as the Proton acceptor. Residues 197 to 201 (YCASK) and Lys201 each bind NADP(+).

This sequence belongs to the short-chain dehydrogenases/reductases (SDR) family.

The protein resides in the membrane. The polypeptide is 11-beta-hydroxysteroid dehydrogenase-like 6 (HSD6) (Arabidopsis thaliana (Mouse-ear cress)).